Consider the following 150-residue polypeptide: Transcriptional repressor NrdR (150 aa).

Residues 1 to 22 form a disordered region; the sequence is MKCPYCSAPDSRVVNSRPSDDG. Residues 3–34 fold into a zinc finger; sequence CPYCSAPDSRVVNSRPSDDGASIRRRRECLRC. Positions 49-136 constitute an ATP-cone domain; it reads LMVLKRGGQR…VYRDFDSLER (88 aa).

This sequence belongs to the NrdR family. Zn(2+) serves as cofactor.

Negatively regulates transcription of bacterial ribonucleotide reductase nrd genes and operons by binding to NrdR-boxes. The chain is Transcriptional repressor NrdR from Deinococcus geothermalis (strain DSM 11300 / CIP 105573 / AG-3a).